The chain runs to 341 residues: Guanine nucleotide-binding protein subunit beta (341 aa).

7 WD repeats span residues 54 to 84, 96 to 126, 142 to 171, 183 to 213, 225 to 255, 269 to 299, and 311 to 341; these read GHLA…IVWD, LRSS…SIYS, GHTG…ALWD, GHTG…KLWD, GHES…RLFD, NIIC…NVWD, and GHDN…KIWN.

It belongs to the WD repeat G protein beta family. G proteins are composed of 3 units, alpha, beta and gamma.

Guanine nucleotide-binding proteins (G proteins) are involved as a modulator or transducer in various transmembrane signaling systems. The beta and gamma chains are required for the GTPase activity, for replacement of GDP by GTP, and for G protein-effector interaction. The chain is Guanine nucleotide-binding protein subunit beta from Lymnaea stagnalis (Great pond snail).